Consider the following 419-residue polypeptide: Peroxisome biogenesis factor 10 (419 aa).

The Peroxisomal matrix segment spans residues 1-27 (MPPSEEIKLRAVSPRPDFKANYLEFAN). A helical transmembrane segment spans residues 28 to 57 (APAIVRANQKDSYFETVLRDKLQNVIQIFK). Position 58 (glycine 58) is a topological domain, cytoplasmic. The chain crosses the membrane as a helical span at residues 59–80 (QRFTHTHPEEIGVAAKALYLSL). The Peroxisomal matrix portion of the chain corresponds to 81 to 108 (TTLLGTKTLGEEYVDLIYVSRDGKRIPR). A helical transmembrane segment spans residues 109–141 (YLARAGFIFAYAILPYFLTRLFRRLKSSSTPKD). Residues 142–158 (EVTEEKINKELPISLRI) are Cytoplasmic-facing. A helical membrane pass occupies residues 159–185 (EKYLSNMSYSKVLDTIMNLHIAVFYFS). Topologically, residues 186-215 (GQFYNISKRFFSMRYAFGHKINKERTPNGN) are peroxisomal matrix. Residues 216 to 235 (YELLGGLIVLQLVMKSLGGF) traverse the membrane as a helical segment. Topologically, residues 236–419 (KGLIGSFTGN…RTLGYFLVVF (184 aa)) are cytoplasmic. Zn(2+) is bound by residues cysteine 298, cysteine 301, cysteine 313, histidine 315, cysteine 318, cysteine 321, cysteine 334, and cysteine 347. The RING-type zinc finger occupies 298-360 (CMLCLSYMTN…FYIPTLNKIC (63 aa)).

This sequence belongs to the pex2/pex10/pex12 family. Component of the peroxisomal translocation complex, composed of at least PEX3, PEX2, PEX10 and PEX12. Interacts with PEX19.

It localises to the peroxisome membrane. The catalysed reaction is S-ubiquitinyl-[E2 ubiquitin-conjugating enzyme]-L-cysteine + [acceptor protein]-L-lysine = [E2 ubiquitin-conjugating enzyme]-L-cysteine + N(6)-ubiquitinyl-[acceptor protein]-L-lysine.. Its pathway is protein modification; protein ubiquitination. Its activity is regulated as follows. The E3 ubiquitin-protein ligase activity is stimulated by PEX12. Functionally, E3 ubiquitin-protein ligase component of the peroxisomal translocation complex. The two types of peroxisomal matrix targeting signals, PTS1 and PTS2, are first recognized in the cytosol by their receptors PEX5 and PEX7, respectively, which then carry the cargo to the peroxisomal membrane. The peroxisomal targeting signal (PTS) receptor-cargo complexes interact with peroxisomal membrane protein (PMP) components of the docking complex. They have then additional downstream interactions with the translocation complex, leading to the transport of fully folded and oligomerized cargo into the peroxisome matrix. The peroxisomal translocation complex forms the retrotranslocation channel with each subunit contributing transmembrane segments that coassemble into an open channel that specifically allows the passage of PEX5 and PEX20 through the peroxisomal membrane. Specifically catalyzes monoubiquitination of PEX5 and/or PEX20 at 'Cys-6' and 'Cys-8', respectively, a modification that acts as a signal for PEX5 or PEX20 export from peroxisomes to the cytosol, thereby promoting PEX5 and PEX20 recycling. The protein is Peroxisome biogenesis factor 10 of Komagataella pastoris (Yeast).